The sequence spans 357 residues: Peptide chain release factor 1 (357 aa).

Gln-232 carries the post-translational modification N5-methylglutamine. Positions 281–305 (DRQHNEMAADRRSQVGSGDRSERIR) are enriched in basic and acidic residues. Residues 281 to 309 (DRQHNEMAADRRSQVGSGDRSERIRTYNF) are disordered.

Belongs to the prokaryotic/mitochondrial release factor family. In terms of processing, methylated by PrmC. Methylation increases the termination efficiency of RF1.

Its subcellular location is the cytoplasm. Peptide chain release factor 1 directs the termination of translation in response to the peptide chain termination codons UAG and UAA. This chain is Peptide chain release factor 1, found in Nitratidesulfovibrio vulgaris (strain DSM 19637 / Miyazaki F) (Desulfovibrio vulgaris).